Here is a 330-residue protein sequence, read N- to C-terminus: Carbonic anhydrase (330 aa).

Residues 1 to 109 are chloroplast transit peptide-like; sequence MSAASAFAMN…AATRIDQITA (109 aa).

Belongs to the beta-class carbonic anhydrase family.

The protein resides in the cytoplasm. The enzyme catalyses hydrogencarbonate + H(+) = CO2 + H2O. Reversible hydration of carbon dioxide. The polypeptide is Carbonic anhydrase (Flaveria bidentis (Coastal plain yellowtops)).